Consider the following 206-residue polypeptide: Protein GET1 (206 aa).

At 1-4 (MPSL) the chain is on the lumenal side. The helical transmembrane segment at 5-24 (LITVLFLNVIIYVINTVGAA) threads the bilayer. Residues 25-110 (TVDGLLWLLY…TFDMTIKIAR (86 aa)) are Cytoplasmic-facing. The stretch at 75–100 (AKLRRRHDKAMEAYEAKNNELTQSKS) forms a coiled coil. A helical membrane pass occupies residues 111-131 (WAATSGLMLFLQFWYSKTPIF). Residues 132 to 155 (TLPPGWIPWQVQWVLSFPRAPMGT) lie on the Lumenal side of the membrane. The helical transmembrane segment at 156–172 (VSIQIWGGACATVVALV) threads the bilayer. Topologically, residues 173–206 (GDAMRASLAYVSKPKIDRIKLGATMEGKEGKKRQ) are cytoplasmic.

The protein belongs to the WRB/GET1 family. In terms of assembly, interacts with GET3.

It localises to the endoplasmic reticulum membrane. In terms of biological role, required for the post-translational delivery of tail-anchored (TA) proteins to the endoplasmic reticulum. Acts as a membrane receptor for soluble GET3, which recognizes and selectively binds the transmembrane domain of TA proteins in the cytosol. This is Protein GET1 from Ajellomyces capsulatus (strain NAm1 / WU24) (Darling's disease fungus).